A 200-amino-acid chain; its full sequence is Small ribosomal subunit protein uS4 (200 aa).

The interval Thr22–Lys42 is disordered. Residues Thr92–Val155 form the S4 RNA-binding domain.

The protein belongs to the universal ribosomal protein uS4 family. In terms of assembly, part of the 30S ribosomal subunit. Contacts protein S5. The interaction surface between S4 and S5 is involved in control of translational fidelity.

Functionally, one of the primary rRNA binding proteins, it binds directly to 16S rRNA where it nucleates assembly of the body of the 30S subunit. Its function is as follows. With S5 and S12 plays an important role in translational accuracy. This Bacillus pumilus (strain SAFR-032) protein is Small ribosomal subunit protein uS4.